We begin with the raw amino-acid sequence, 172 residues long: PRELI domain containing protein 3A (172 aa).

The PRELI/MSF1 domain maps to 1 to 172 (MKIWSSEHVF…IIEHSESAVS (172 aa)).

It belongs to the slowmo family. Interacts with TRIAP1.

It is found in the mitochondrion. Its function is as follows. In vitro, the TRIAP1:PRELID3A complex mediates the transfer of phosphatidic acid (PA) between liposomes and probably functions as a PA transporter across the mitochondrion intermembrane space. Phosphatidic acid import is required for cardiolipin (CL) synthesis in the mitochondrial inner membrane. This Homo sapiens (Human) protein is PRELI domain containing protein 3A (PRELID3A).